Reading from the N-terminus, the 20-residue chain is U27-ctenitoxin-Pn1a (20 aa).

The interval 1-20 (LAKRADICQPGKTSQRACET) is disordered. Polar residues predominate over residues 11–20 (GKTSQRACET).

Post-translationally, contains 4 disulfide bonds. In terms of tissue distribution, expressed by the venom gland.

It localises to the secreted. In terms of biological role, has a vascular smooth muscle contracting activity. Causes short-lived contractions of both arterial and venous rabbit vessels. This Phoneutria nigriventer (Brazilian armed spider) protein is U27-ctenitoxin-Pn1a.